Here is an 859-residue protein sequence, read N- to C-terminus: DNA mismatch repair protein MutS (859 aa).

617 to 624 contacts ATP; sequence GPNMGGKS. Residues 799 to 821 form a disordered region; that stretch reads ETTSLPHEQPRAKPGKPAVPQQS.

This sequence belongs to the DNA mismatch repair MutS family.

Functionally, this protein is involved in the repair of mismatches in DNA. It is possible that it carries out the mismatch recognition step. This protein has a weak ATPase activity. The polypeptide is DNA mismatch repair protein MutS (Pseudomonas syringae pv. syringae (strain B728a)).